The following is a 440-amino-acid chain: Tryptophan synthase beta chain 2 (440 aa).

Position 110 is an N6-(pyridoxal phosphate)lysine (Lys-110).

The protein belongs to the TrpB family. In terms of assembly, tetramer of two alpha and two beta chains. Pyridoxal 5'-phosphate serves as cofactor.

It catalyses the reaction (1S,2R)-1-C-(indol-3-yl)glycerol 3-phosphate + L-serine = D-glyceraldehyde 3-phosphate + L-tryptophan + H2O. Its pathway is amino-acid biosynthesis; L-tryptophan biosynthesis; L-tryptophan from chorismate: step 5/5. Functionally, the beta subunit is responsible for the synthesis of L-tryptophan from indole and L-serine. In Pyrococcus abyssi (strain GE5 / Orsay), this protein is Tryptophan synthase beta chain 2 (trpB2).